The sequence spans 441 residues: Velvet complex subunit B (441 aa).

Composition is skewed to polar residues over residues 1-14 (MNPG…QPGH) and 60-75 (MMQQ…STTE). A disordered region spans residues 1–104 (MNPGYSSTAS…QPHVGEQDGR (104 aa)). One can recognise a Velvet domain in the interval 100-426 (EQDGRKYRLD…AGQGIKIPIR (327 aa)).

It belongs to the velvet family. VelB subfamily. Component of the heterotrimeric velvet complex composed of LAEA, VEA and VELB; VEA acting as a bridging protein between LAEA and VELB. Forms a heterodimeric complex with VOSA; the formation of the VELB-VOSA complex is light-dependent.

Its subcellular location is the nucleus. It localises to the cytoplasm. In terms of biological role, component of the velvet transcription factor complex that controls sexual/asexual developmental ratio in response to light, promoting sexual development in the darkness while stimulating asexual sporulation under illumination. The velvet complex acts as a global regulator for secondary metabolite gene expression. Component of the VELB-VOSA heterodimeric complex that plays a dual role in activating genes associated with spore maturation and repressing certain development-associated genes. The VELB-VOSA complex binds DNA through the DNA-binding domain of VOSA that recognizes an 11-nucleotide consensus sequence 5'-CTGGCCGCGGC-3' consisting of two motifs in the promoters of key developmental regulatory genes. Involved in the regulation of the response to eactive oxygen species (ROS) stress. The protein is Velvet complex subunit B of Pyricularia oryzae (strain 70-15 / ATCC MYA-4617 / FGSC 8958) (Rice blast fungus).